Here is a 312-residue protein sequence, read N- to C-terminus: Pantothenate kinase (312 aa).

ATP is bound at residue 92–99 (GSVAVGKS).

Belongs to the prokaryotic pantothenate kinase family.

It localises to the cytoplasm. The catalysed reaction is (R)-pantothenate + ATP = (R)-4'-phosphopantothenate + ADP + H(+). It participates in cofactor biosynthesis; coenzyme A biosynthesis; CoA from (R)-pantothenate: step 1/5. In Vibrio cholerae serotype O1 (strain ATCC 39315 / El Tor Inaba N16961), this protein is Pantothenate kinase (coaA).